The chain runs to 333 residues: Glycerol-3-phosphate dehydrogenase [NAD(P)+] (333 aa).

NADPH is bound by residues Trp13, Lys33, and Lys108. 2 residues coordinate sn-glycerol 3-phosphate: Lys108 and Gly138. Ser142 contacts NADPH. 5 residues coordinate sn-glycerol 3-phosphate: Lys193, Asp246, Ser256, Arg257, and Asn258. The active-site Proton acceptor is the Lys193. Position 257 (Arg257) interacts with NADPH. Residues Val281 and Glu283 each coordinate NADPH.

The protein belongs to the NAD-dependent glycerol-3-phosphate dehydrogenase family.

The protein localises to the cytoplasm. The catalysed reaction is sn-glycerol 3-phosphate + NAD(+) = dihydroxyacetone phosphate + NADH + H(+). The enzyme catalyses sn-glycerol 3-phosphate + NADP(+) = dihydroxyacetone phosphate + NADPH + H(+). Its pathway is membrane lipid metabolism; glycerophospholipid metabolism. Functionally, catalyzes the reduction of the glycolytic intermediate dihydroxyacetone phosphate (DHAP) to sn-glycerol 3-phosphate (G3P), the key precursor for phospholipid synthesis. The protein is Glycerol-3-phosphate dehydrogenase [NAD(P)+] of Bifidobacterium longum (strain NCC 2705).